The following is a 395-amino-acid chain: Phosphopentomutase (395 aa).

Mn(2+) is bound by residues D16, D289, H294, D330, H331, and H342.

Belongs to the phosphopentomutase family. Mn(2+) serves as cofactor.

Its subcellular location is the cytoplasm. The catalysed reaction is 2-deoxy-alpha-D-ribose 1-phosphate = 2-deoxy-D-ribose 5-phosphate. The enzyme catalyses alpha-D-ribose 1-phosphate = D-ribose 5-phosphate. It participates in carbohydrate degradation; 2-deoxy-D-ribose 1-phosphate degradation; D-glyceraldehyde 3-phosphate and acetaldehyde from 2-deoxy-alpha-D-ribose 1-phosphate: step 1/2. Its function is as follows. Isomerase that catalyzes the conversion of deoxy-ribose 1-phosphate (dRib-1-P) and ribose 1-phosphate (Rib-1-P) to deoxy-ribose 5-phosphate (dRib-5-P) and ribose 5-phosphate (Rib-5-P), respectively. The sequence is that of Phosphopentomutase from Geobacillus kaustophilus (strain HTA426).